The chain runs to 470 residues: PTS system trehalose-specific EIIBC component (470 aa).

The 88-residue stretch at 1–88 folds into the PTS EIIB type-1 domain; the sequence is MGELNKSARQ…VKETGIGEST (88 aa). C27 acts as the Phosphocysteine intermediate; for EIIB activity in catalysis. Position 27 is a phosphocysteine; by EIIA (C27). The 363-residue stretch at 108–470 folds into the PTS EIIC type-1 domain; the sequence is KTLADIFIPI…TYAYARFKHK (363 aa). 10 helical membrane passes run 110–130, 160–180, 183–203, 234–254, 263–283, 301–321, 326–346, 347–367, 403–423, and 443–463; these read LADI…LMGI, INLI…WSAV, FGGN…PDLL, GQVL…VFLT, LLVV…IIIG, FGSF…ALVI, HTFL…TFLW, PMLA…MFIV, FIIA…QGVL, and WGAF…GTYA.

The protein resides in the cell membrane. The enzyme catalyses alpha,alpha-trehalose(out) + N(pros)-phospho-L-histidyl-[protein] = alpha,alpha-trehalose 6-phosphate(in) + L-histidyl-[protein]. The phosphoenolpyruvate-dependent sugar phosphotransferase system (sugar PTS), a major carbohydrate active transport system, catalyzes the phosphorylation of incoming sugar substrates concomitantly with their translocation across the cell membrane. This system is involved in trehalose transport. The protein is PTS system trehalose-specific EIIBC component (treP) of Bacillus subtilis (strain 168).